The following is a 66-amino-acid chain: Large ribosomal subunit protein bL35 (66 aa).

The segment covering 1–16 (MPKMKTHKGSAKRFKK) has biased composition (basic residues). Positions 1 to 24 (MPKMKTHKGSAKRFKKTGTGQLKR) are disordered.

It belongs to the bacterial ribosomal protein bL35 family.

In Anoxybacillus flavithermus (strain DSM 21510 / WK1), this protein is Large ribosomal subunit protein bL35.